Here is a 428-residue protein sequence, read N- to C-terminus: Glutamyl-tRNA reductase (428 aa).

Substrate-binding positions include 49–52 (TCNR), serine 109, 114–116 (EGQ), and glutamine 120. Cysteine 50 functions as the Nucleophile in the catalytic mechanism. 189-194 (GAGKMS) is an NADP(+) binding site.

It belongs to the glutamyl-tRNA reductase family. As to quaternary structure, homodimer.

It carries out the reaction (S)-4-amino-5-oxopentanoate + tRNA(Glu) + NADP(+) = L-glutamyl-tRNA(Glu) + NADPH + H(+). The protein operates within porphyrin-containing compound metabolism; protoporphyrin-IX biosynthesis; 5-aminolevulinate from L-glutamyl-tRNA(Glu): step 1/2. It functions in the pathway porphyrin-containing compound metabolism; chlorophyll biosynthesis. In terms of biological role, catalyzes the NADPH-dependent reduction of glutamyl-tRNA(Glu) to glutamate 1-semialdehyde (GSA). The chain is Glutamyl-tRNA reductase from Gloeothece citriformis (strain PCC 7424) (Cyanothece sp. (strain PCC 7424)).